The primary structure comprises 65 residues: Large ribosomal subunit protein bL32 (65 aa).

Positions 1–18 (MAVPKRRHSKSRTRKRRS) are enriched in basic residues. A disordered region spans residues 1 to 20 (MAVPKRRHSKSRTRKRRSTY).

Belongs to the bacterial ribosomal protein bL32 family.

In Salinibacter ruber (strain DSM 13855 / M31), this protein is Large ribosomal subunit protein bL32.